The sequence spans 847 residues: MNKTTEYIDAMPIAASEKAALPKTDIRAVHQALDAEHRTWAREDDSPQGSVKARLEQAWPDSLADGQLIKDDEGRDQLKAMPEAKRSSMFPDPWRTNPVGRFWDRLRGRDVTPRYLARLTKEEQESEQKWRTVGTIRRYILLILTLAQTVVATWYMKTILPYQGWALINPMDMVGQDLWVSFMQLLPYMLQTGILILFAVLFCWVSAGFWTALMGFLQLLIGRDKYSISASTVGDEPLNPEHRTALIMPICNEDVNRVFAGLRATWESVKATGNAKHFDVYILSDSYNPDICVAEQKAWMELIAEVGGEGQIFYRRRRRRVKRKSGNIDDFCRRWGSQYSYMVVLDADSVMTGDCLCGLVRLMEANPNAGIIQSSPKASGMDTLYARCQQFATRVYGPLFTAGLHFWQLGESHYWGHNAIIRVKPFIEHCALAPLPGEGSFAGSILSHDFVEAALMRRAGWGVWIAYDLPGSYEELPPNLLDELKRDRRWCHGNLMNFRLFLVKGMHPVHRAVFLTGVMSYLSAPLWFMFLALSTALQVVHALTEPQYFLQPRQLFPVWPQWRPELAIALFASTMVLLFLPKLLSILLIWCKGTKEYGGFWRVTLSLLLEVLFSVLLAPVRMLFHTVFVVSAFLGWEVVWNSPQRDDDSTSWGEAFKRHGSQLLLGLVWAVGMAWLDLRFLFWLAPIVFSLILSPFVSVISSRATVGLRTKRWKLFLIPEEYSPPQVLVDTDRFLEMNRQRSLDDGFMHAVFNPSFNALATAMATARHRASKVLEIARDRHVEQALNETPEKLNRDRRLVLLSDPVTMARLHFRVWNSPERYSSWVSYYEGIKLNPLALRKPDAASQ.

Residues 1–139 (MNKTTEYIDA…WRTVGTIRRY (139 aa)) are Cytoplasmic-facing. The helical transmembrane segment at 140-160 (ILLILTLAQTVVATWYMKTIL) threads the bilayer. Residues 161–193 (PYQGWALINPMDMVGQDLWVSFMQLLPYMLQTG) lie on the Periplasmic side of the membrane. Residues 194–214 (ILILFAVLFCWVSAGFWTALM) traverse the membrane as a helical segment. At 215-512 (GFLQLLIGRD…VKGMHPVHRA (298 aa)) the chain is on the cytoplasmic side. A helical transmembrane segment spans residues 513–533 (VFLTGVMSYLSAPLWFMFLAL). Residues 534 to 569 (STALQVVHALTEPQYFLQPRQLFPVWPQWRPELAIA) are Periplasmic-facing. Residues 570-590 (LFASTMVLLFLPKLLSILLIW) form a helical membrane-spanning segment. At 591–602 (CKGTKEYGGFWR) the chain is on the cytoplasmic side. The chain crosses the membrane as a helical span at residues 603 to 625 (VTLSLLLEVLFSVLLAPVRMLFH). The Periplasmic segment spans residues 626–679 (TVFVVSAFLGWEVVWNSPQRDDDSTSWGEAFKRHGSQLLLGLVWAVGMAWLDLR). The chain crosses the membrane as a helical span at residues 680–700 (FLFWLAPIVFSLILSPFVSVI). At 701–847 (SSRATVGLRT…ALRKPDAASQ (147 aa)) the chain is on the cytoplasmic side.

This sequence belongs to the glycosyltransferase 2 family. OpgH subfamily.

The protein localises to the cell inner membrane. The protein operates within glycan metabolism; osmoregulated periplasmic glucan (OPG) biosynthesis. Functionally, involved in the biosynthesis of osmoregulated periplasmic glucans (OPGs). The chain is Glucans biosynthesis glucosyltransferase H (mdoH) from Shigella flexneri.